We begin with the raw amino-acid sequence, 268 residues long: Tryptophan synthase alpha chain (268 aa).

Catalysis depends on proton acceptor residues glutamate 49 and aspartate 60.

Belongs to the TrpA family. As to quaternary structure, tetramer of two alpha and two beta chains.

The catalysed reaction is (1S,2R)-1-C-(indol-3-yl)glycerol 3-phosphate + L-serine = D-glyceraldehyde 3-phosphate + L-tryptophan + H2O. It participates in amino-acid biosynthesis; L-tryptophan biosynthesis; L-tryptophan from chorismate: step 5/5. Functionally, the alpha subunit is responsible for the aldol cleavage of indoleglycerol phosphate to indole and glyceraldehyde 3-phosphate. This Vibrio vulnificus (strain CMCP6) protein is Tryptophan synthase alpha chain.